The chain runs to 222 residues: Pectate lyase A (222 aa).

The N-terminal stretch at 1–26 (MKKMLTLLLSAGLVASIFGVMPAAAA) is a signal peptide.

Belongs to the polysaccharide lyase 3 family. The cofactor is Ca(2+).

It is found in the secreted. It carries out the reaction Eliminative cleavage of (1-&gt;4)-alpha-D-galacturonan to give oligosaccharides with 4-deoxy-alpha-D-galact-4-enuronosyl groups at their non-reducing ends.. The enzyme catalyses Eliminative cleavage of (1-&gt;4)-alpha-D-galacturonan methyl ester to give oligosaccharides with 4-deoxy-6-O-methyl-alpha-D-galact-4-enuronosyl groups at their non-reducing ends.. Its pathway is glycan metabolism; pectin degradation. Functionally, catalyzes the depolymerization of both polygalacturonate and pectins with low (20-34%) and high (90%) levels of methyl esterification, with an endo mode of action. In contrast to the majority of pectate lyases, displays high activity on highly methylated pectins. Does not show xylanase and cellulase activity. The protein is Pectate lyase A of Paenibacillus amylolyticus.